A 735-amino-acid polypeptide reads, in one-letter code: Disintegrin and metalloproteinase domain-containing protein 2 (735 aa).

The signal sequence occupies residues 1 to 18 (MWLILLLLSGLSELGGLS). Positions 19 to 180 (QSQTEGTREK…YKIRSIKPQR (162 aa)) are excised as a propeptide. Over 19 to 686 (QSQTEGTREK…ASAYRSKSPR (668 aa)) the chain is Extracellular. Residues asparagine 128, asparagine 226, and asparagine 279 are each glycosylated (N-linked (GlcNAc...) asparagine). One can recognise a Peptidase M12B domain in the interval 184–381 (HYLEIHIVVE…QSSHCLQNQP (198 aa)). 4 cysteine pairs are disulfide-bonded: cysteine 293–cysteine 376, cysteine 335–cysteine 360, cysteine 337–cysteine 342, and cysteine 449–cysteine 469. N-linked (GlcNAc...) asparagine glycans are attached at residues asparagine 359, asparagine 463, asparagine 489, asparagine 569, and asparagine 585. Positions 389–476 (MAVCGNGEVE…EVCEDFFVQN (88 aa)) constitute a Disintegrin domain. The 34-residue stretch at 615-648 (LGYDCNLEKCNHHGVCNNKKNCHCDPTYLPPDCK) folds into the EGF-like domain. Intrachain disulfides connect cysteine 619-cysteine 630, cysteine 624-cysteine 636, and cysteine 638-cysteine 647. Residues 687–707 (WPFFLIIPFYVVILVLIGMLV) traverse the membrane as a helical segment. The Cytoplasmic portion of the chain corresponds to 708–735 (KVYSQRMKWRMDDFSSEEQFESESESKD). Residue serine 729 is modified to Phosphoserine.

In terms of assembly, heterodimer with ADAM1/fertilin subunit alpha. Post-translationally, the signal and the metalloprotease domain are cleaved during the epididymal maturation of the spermatozoa. As to expression, expressed in the testis and testicular sperm (at protein level).

The protein localises to the membrane. Sperm surface membrane protein that may be involved in sperm-egg plasma membrane adhesion and fusion during fertilization. Could have a direct role in sperm-zona binding or migration of sperm from the uterus into the oviduct. Interactions with egg membrane could be mediated via binding between its disintegrin-like domain to one or more integrins receptors on the egg. This is a non catalytic metalloprotease-like protein. This Mus musculus (Mouse) protein is Disintegrin and metalloproteinase domain-containing protein 2.